The primary structure comprises 327 residues: GTP 3',8-cyclase (327 aa).

The 223-residue stretch at 4-226 (AFARDIHYLR…LRLGDHPGIR (223 aa)) folds into the Radical SAM core domain. Arg-13 contacts GTP. The [4Fe-4S] cluster site is built by Cys-20 and Cys-24. Residue Tyr-26 coordinates S-adenosyl-L-methionine. Cys-27 lines the [4Fe-4S] cluster pocket. Arg-63 lines the GTP pocket. Residue Gly-67 coordinates S-adenosyl-L-methionine. Thr-94 serves as a coordination point for GTP. Ser-118 is an S-adenosyl-L-methionine binding site. Lys-155 lines the GTP pocket. Residue Met-189 participates in S-adenosyl-L-methionine binding. [4Fe-4S] cluster is bound by residues Cys-254 and Cys-257. 259–261 (RLR) serves as a coordination point for GTP. A [4Fe-4S] cluster-binding site is contributed by Cys-271.

It belongs to the radical SAM superfamily. MoaA family. Monomer and homodimer. The cofactor is [4Fe-4S] cluster.

The enzyme catalyses GTP + AH2 + S-adenosyl-L-methionine = (8S)-3',8-cyclo-7,8-dihydroguanosine 5'-triphosphate + 5'-deoxyadenosine + L-methionine + A + H(+). The protein operates within cofactor biosynthesis; molybdopterin biosynthesis. Catalyzes the cyclization of GTP to (8S)-3',8-cyclo-7,8-dihydroguanosine 5'-triphosphate. The chain is GTP 3',8-cyclase from Heliobacterium modesticaldum (strain ATCC 51547 / Ice1).